The primary structure comprises 204 residues: Ras-related protein RABG1 (204 aa).

12–19 (GDSGVGKT) lines the GTP pocket. The Effector region signature appears at 34–42 (HNSTIYVDL). GTP contacts are provided by residues 60-64 (DTAGQ), 122-125 (NKTD), and 155-156 (SA). S-geranylgeranyl cysteine attachment occurs at residues Cys202 and Cys204. Cys204 is subject to Cysteine methyl ester.

It belongs to the small GTPase superfamily. Rab family.

The protein resides in the cell membrane. Intracellular vesicle trafficking and protein transport. The protein is Ras-related protein RABG1 (RABG1) of Arabidopsis thaliana (Mouse-ear cress).